The sequence spans 569 residues: Urease subunit alpha (569 aa).

A Urease domain is found at 131–569; the sequence is GGFDSHIHFI…LPMAQRYFLF (439 aa). The Ni(2+) site is built by His-136, His-138, and Lys-219. At Lys-219 the chain carries N6-carboxylysine. Substrate is bound at residue His-221. The Ni(2+) site is built by His-248 and His-274. His-322 (proton donor) is an active-site residue. Residue Asp-362 coordinates Ni(2+).

It belongs to the metallo-dependent hydrolases superfamily. Urease alpha subunit family. Heterotrimer of UreA (gamma), UreB (beta) and UreC (alpha) subunits. Three heterotrimers associate to form the active enzyme. Ni cation is required as a cofactor. Carboxylation allows a single lysine to coordinate two nickel ions.

The protein resides in the cytoplasm. It catalyses the reaction urea + 2 H2O + H(+) = hydrogencarbonate + 2 NH4(+). It participates in nitrogen metabolism; urea degradation; CO(2) and NH(3) from urea (urease route): step 1/1. The protein is Urease subunit alpha of Ruegeria pomeroyi (strain ATCC 700808 / DSM 15171 / DSS-3) (Silicibacter pomeroyi).